We begin with the raw amino-acid sequence, 837 residues long: Thioredoxin domain-containing protein 3 homolog (837 aa).

Residues 6-115 (EQIQLQKEIL…LKNVERELKQ (110 aa)) form the Thioredoxin domain. An intrachain disulfide couples Cys-39 to Cys-42. 3 NDK regions span residues 201 to 345 (KEVT…SVPI), 355 to 491 (IEKT…FPKQ), and 493 to 629 (TLAV…EVLP). The segment at 633-837 (VKDSVASISM…EEKTEEQTAS (205 aa)) is disordered. Positions 638-647 (ASISMEQSQV) are enriched in polar residues. Residues 652–670 (EEGGEEQTEQPAGEGEEQQ) show a composition bias toward acidic residues. 3 stretches are compositionally biased toward low complexity: residues 671–707 (AEQPAAESGEQQAEGGEPATETATEGGEQQAEQPPAE), 718–752 (QQTQEGETPAADEAQAEQTQEGETPAADEAQAEQT), and 766–787 (APATEETAAEQAPAAEETQQTQ). Positions 805–819 (AGGGEEAVATEGGGE) are enriched in gly residues. The segment covering 820-837 (GDAKPEGGEEKTEEQTAS) has biased composition (basic and acidic residues).

This sequence in the C-terminal section; belongs to the NDK family. Monomer. Testis-specific. In sperm, it is a component of the arm dynein of sperm axoneme.

Probably required during the final stages of sperm tail maturation in the testis and/or epididymis, where extensive disulfide bonding of fibrous sheath (FS) proteins occurs. In vitro, it has neither nucleoside diphosphate kinase (NDPK) activity nor reducing activity on disulfide bonds. Exhibits a 3'-5' exonuclease activity with a preference for single-stranded DNA, suggesting roles in DNA proofreading and repair. In Heliocidaris crassispina (Sea urchin), this protein is Thioredoxin domain-containing protein 3 homolog (NME8).